Consider the following 115-residue polypeptide: Large ribosomal subunit protein uL22 (115 aa).

Belongs to the universal ribosomal protein uL22 family. Part of the 50S ribosomal subunit.

Its function is as follows. This protein binds specifically to 23S rRNA; its binding is stimulated by other ribosomal proteins, e.g. L4, L17, and L20. It is important during the early stages of 50S assembly. It makes multiple contacts with different domains of the 23S rRNA in the assembled 50S subunit and ribosome. The globular domain of the protein is located near the polypeptide exit tunnel on the outside of the subunit, while an extended beta-hairpin is found that lines the wall of the exit tunnel in the center of the 70S ribosome. In Ligilactobacillus salivarius (strain UCC118) (Lactobacillus salivarius), this protein is Large ribosomal subunit protein uL22.